A 566-amino-acid polypeptide reads, in one-letter code: Proline--tRNA ligase (566 aa).

It belongs to the class-II aminoacyl-tRNA synthetase family. ProS type 1 subfamily. As to quaternary structure, homodimer.

The protein resides in the cytoplasm. It carries out the reaction tRNA(Pro) + L-proline + ATP = L-prolyl-tRNA(Pro) + AMP + diphosphate. Its function is as follows. Catalyzes the attachment of proline to tRNA(Pro) in a two-step reaction: proline is first activated by ATP to form Pro-AMP and then transferred to the acceptor end of tRNA(Pro). As ProRS can inadvertently accommodate and process non-cognate amino acids such as alanine and cysteine, to avoid such errors it has two additional distinct editing activities against alanine. One activity is designated as 'pretransfer' editing and involves the tRNA(Pro)-independent hydrolysis of activated Ala-AMP. The other activity is designated 'posttransfer' editing and involves deacylation of mischarged Ala-tRNA(Pro). The misacylated Cys-tRNA(Pro) is not edited by ProRS. This Bacillus cereus (strain G9842) protein is Proline--tRNA ligase.